The following is a 297-amino-acid chain: Magnetosome protein MamB (297 aa).

The Cytoplasmic segment spans residues 1 to 12; the sequence is MKFENCRDCREE. Residues 1-214 are transmembrane domain (TMD); sequence MKFENCRDCR…GLMDSSVDTE (214 aa). The chain crosses the membrane as a helical span at residues 13–33; it reads VVWWAFTADICMTLFKGILGL. The Lumenal segment spans residues 34–83; that stretch reads MSGSVALVADSLHSGADVVASGVTQLSLKISNKPADERYPFGYGNIQYIS. A helical transmembrane segment spans residues 84-104; that stretch reads SAIVGSLLLIGASFLMYGSVV. Over 105 to 112 the chain is Cytoplasmic; it reads KLISGTYE. The chain crosses the membrane as a helical span at residues 113–133; that stretch reads APSIFAALGASVTVIVNELMY. At 134-164 the chain is on the lumenal side; that stretch reads RYQICVGNENNSPAIIANAWDNRSDAISSAA. A helical membrane pass occupies residues 165–185; the sequence is VMVGVIASVIGFPIADTIAAI. Residues 186–297 lie on the Cytoplasmic side of the membrane; it reads GVSALVGHIG…PAPAAVTVRV (112 aa). Residues 215–297 form a C-terminal domain (CTD) region; sequence LLQTAWQIAT…PAPAAVTVRV (83 aa).

It belongs to the cation diffusion facilitator (CDF) transporter (TC 2.A.4) family. As to quaternary structure, forms homodimers via its C-terminal domain, may form higher order multimers that are sensitive to reducing agent. Probably interacts with MamE. Interacts with MamM via their C-terminal domains.

It localises to the cell inner membrane. Its subcellular location is the magnetosome membrane. Plays a dual, essential role in magnetosome formation; required for magnetosome vesicle formation as well as biomineralization. Requires heterodimerization with MamM for stability. Probably binds and transports iron. One of 7 genes (mamLQBIEMO) able to induce magnetosome membrane biogenesis; coexpression of mamLQRBIEMO in a deletion of the 17 gene mamAB operon restores magnetosome vesicle formation but not magnetite biosynthesis. The sequence is that of Magnetosome protein MamB from Magnetospirillum gryphiswaldense (strain DSM 6361 / JCM 21280 / NBRC 15271 / MSR-1).